The primary structure comprises 299 residues: Probable lipid kinase YegS (299 aa).

The DAGKc domain maps to 2–133; sequence ANFPASLLIL…IDMARVNDKT (132 aa). ATP-binding positions include Thr-40, 66–72, and Thr-95; that span reads GDGTINE. Mg(2+) contacts are provided by Leu-215, Asp-218, and Leu-220. Catalysis depends on Glu-271, which acts as the Proton acceptor.

The protein belongs to the diacylglycerol/lipid kinase family. YegS lipid kinase subfamily. Mg(2+) is required as a cofactor. Requires Ca(2+) as cofactor.

Its subcellular location is the cytoplasm. Its function is as follows. Probably phosphorylates lipids; the in vivo substrate is unknown. This Salmonella heidelberg (strain SL476) protein is Probable lipid kinase YegS.